The following is a 670-amino-acid chain: Protein ACCELERATED CELL DEATH 6 (670 aa).

Topologically, residues 1–456 are cytoplasmic; it reads MDSSGADLDR…PNYIFHERWT (456 aa). The tract at residues 18 to 47 is disordered; that stretch reads LVSHDQRKDFSHSGGVGTTSPTGDTEPVPK. ANK repeat units follow at residues 66 to 95, 100 to 129, 134 to 163, 182 to 211, 216 to 248, 260 to 290, 295 to 325, 329 to 358, 363 to 391, and 399 to 428; these read EMTP…PMER, TGDS…CLLF, SRQT…SALA, DGNT…DAPF, KGIS…NVDR, QGNK…SLMD, DGRT…GVYV, DGSF…ASKY, LGQN…DTKH, and DGNT…EILK. The chain crosses the membrane as a helical span at residues 457–477; sequence LALLLYAIHSSGFESVKSLTI. Residues 478 to 492 lie on the Extracellular side of the membrane; that stretch reads QSVPLDPKKNRHYVN. A helical transmembrane segment spans residues 493 to 513; that stretch reads ALLVVAALVATVTFAAGFTIP. Topologically, residues 514–537 are cytoplasmic; that stretch reads GGYISDSKKPNLGRATLATNPTLF. The helical transmembrane segment at 538–558 threads the bilayer; it reads IFLLFDILAMQSSVATICTLI. The Extracellular segment spans residues 559 to 577; sequence WAQLGDLALILKSLHVALP. The chain crosses the membrane as a helical span at residues 578-598; the sequence is LLLFSLLCMPVAFLFGVITAI. The Cytoplasmic portion of the chain corresponds to 599–602; the sequence is AHVK. Residues 603–623 form a helical membrane-spanning segment; the sequence is WLLVTISIISGGFFLFAIFIL. The Extracellular segment spans residues 624–638; the sequence is GPHVMLQRSHLPPSS. A helical transmembrane segment spans residues 639–659; that stretch reads GIFLKTFMLTIDISELFVILI. Residues 660-670 lie on the Cytoplasmic side of the membrane; that stretch reads KACFGCVACSE.

Component of large complexes containing, at least, FLS2, HSP70 and ACD6 in endoplasmic reticulum, plasma membrane and soluble fraction. Associated with HSP70 proteins during endoplasmic reticulum-associated degradation (ERAD). Reduced complex levels upon benzothiazole (BTH) treatment. In terms of processing, ubiquitinated. Basal expression requires light and salicylic acid (SA).

Its subcellular location is the cell membrane. It localises to the endoplasmic reticulum membrane. Its function is as follows. Dose-dependent activator of the defense response against virulent pathogens, including bacteria, fungi and oomycetes, that acts in a positive feedback loop with the defense signal salicylic acid (SA). Regulates the salicylic acid (SA) signaling pathway leading to cell death and modulating cell fate (e.g. cell enlargement and/or cell division). In response to SA signaling, triggers the accumulation of FLS2 at the plasma membrane, thus priming defenses. Involved in SA-dependent freezing signaling and tolerance. This chain is Protein ACCELERATED CELL DEATH 6, found in Arabidopsis thaliana (Mouse-ear cress).